We begin with the raw amino-acid sequence, 141 residues long: Hemoglobin subunit alpha (141 aa).

The 141-residue stretch at 1–141 folds into the Globin domain; that stretch reads VLSSADKANI…VSTVLTSKYR (141 aa). The residue at position 3 (Ser-3) is a Phosphoserine. N6-succinyllysine occurs at positions 7 and 11. Lys-16 carries the N6-acetyllysine; alternate modification. Lys-16 bears the N6-succinyllysine; alternate mark. The residue at position 24 (Tyr-24) is a Phosphotyrosine. Lys-40 is subject to N6-succinyllysine. Ser-49 is subject to Phosphoserine. An O2-binding site is contributed by His-58. Heme b is bound at residue His-87. A Phosphoserine modification is found at Ser-102. Thr-108 carries the post-translational modification Phosphothreonine. Phosphoserine occurs at positions 124 and 131. Thr-134 and Thr-137 each carry phosphothreonine. Ser-138 is subject to Phosphoserine.

Belongs to the globin family. Heterotetramer of two alpha chains and two beta chains. In terms of tissue distribution, red blood cells.

In terms of biological role, involved in oxygen transport from the lung to the various peripheral tissues. Its function is as follows. Hemopressin acts as an antagonist peptide of the cannabinoid receptor CNR1. Hemopressin-binding efficiently blocks cannabinoid receptor CNR1 and subsequent signaling. The chain is Hemoglobin subunit alpha (HBA) from Proteles cristata (Aardwolf).